Reading from the N-terminus, the 249-residue chain is 2,3-bisphosphoglycerate-dependent phosphoglycerate mutase (249 aa).

Substrate contacts are provided by residues 8 to 15 (RHGESAWN), 21 to 22 (TG), Arg-60, 87 to 90 (ERHY), Lys-98, 114 to 115 (RR), and 183 to 184 (GN). His-9 (tele-phosphohistidine intermediate) is an active-site residue. Residue Glu-87 is the Proton donor/acceptor of the active site.

The protein belongs to the phosphoglycerate mutase family. BPG-dependent PGAM subfamily.

It carries out the reaction (2R)-2-phosphoglycerate = (2R)-3-phosphoglycerate. It functions in the pathway carbohydrate degradation; glycolysis; pyruvate from D-glyceraldehyde 3-phosphate: step 3/5. Catalyzes the interconversion of 2-phosphoglycerate and 3-phosphoglycerate. The chain is 2,3-bisphosphoglycerate-dependent phosphoglycerate mutase from Methanosphaerula palustris (strain ATCC BAA-1556 / DSM 19958 / E1-9c).